A 378-amino-acid chain; its full sequence is Chaperone protein DnaJ (378 aa).

The 66-residue stretch at 5–70 folds into the J domain; the sequence is DYYEVLGVAK…QKRAAYDQYG (66 aa). A CR-type zinc finger spans residues 138–216; the sequence is GYDTQIRVPS…CHGSGKVKET (79 aa). Zn(2+) contacts are provided by Cys-151, Cys-154, Cys-168, Cys-171, Cys-190, Cys-193, Cys-204, and Cys-207. CXXCXGXG motif repeat units lie at residues 151-158, 168-175, 190-197, and 204-211; these read CEVCHGSG, CPTCHGQG, CPKCHGTG, and CVHCHGSG.

It belongs to the DnaJ family. Homodimer. Zn(2+) is required as a cofactor.

The protein resides in the cytoplasm. Its function is as follows. Participates actively in the response to hyperosmotic and heat shock by preventing the aggregation of stress-denatured proteins and by disaggregating proteins, also in an autonomous, DnaK-independent fashion. Unfolded proteins bind initially to DnaJ; upon interaction with the DnaJ-bound protein, DnaK hydrolyzes its bound ATP, resulting in the formation of a stable complex. GrpE releases ADP from DnaK; ATP binding to DnaK triggers the release of the substrate protein, thus completing the reaction cycle. Several rounds of ATP-dependent interactions between DnaJ, DnaK and GrpE are required for fully efficient folding. Also involved, together with DnaK and GrpE, in the DNA replication of plasmids through activation of initiation proteins. This chain is Chaperone protein DnaJ, found in Burkholderia lata (strain ATCC 17760 / DSM 23089 / LMG 22485 / NCIMB 9086 / R18194 / 383).